We begin with the raw amino-acid sequence, 753 residues long: Photosystem I P700 chlorophyll a apoprotein A1 (753 aa).

8 helical membrane-spanning segments follow: residues 73-96 (IFSAHFGQLAIIFIWLSGMYYHGA), 159-182 (LYCTAIGALIFAALMLFAGWFHYH), 198-222 (LNHHLAGLLGLGSLSWAGHQIHVSL), 294-312 (TAHHHLAIAVLFLIAGHMY), 349-372 (WHAQLAVNLAMLGSLTIVVAHHMY), 388-414 (LSLFTHHMWIGGFIIVGAAAHAAIFMV), 436-458 (AIVSHLNWVCIFLGFHSFGLYIH), and 534-552 (FLVHHIHAFTIHVTVLILL). Positions 576 and 585 each coordinate [4Fe-4S] cluster. The next 2 helical transmembrane spans lie at 592 to 613 (HVFLGLFWMYNAISVVIFHFSW) and 667 to 689 (LSAYGLLFLGAHFVWAFSLMFLF). H678 contacts chlorophyll a'. Chlorophyll a contacts are provided by M686 and Y694. W695 serves as a coordination point for phylloquinone. The helical transmembrane segment at 727-747 (AVGVAHYLLGGIVTTWAFFLA) threads the bilayer.

Belongs to the PsaA/PsaB family. In terms of assembly, the PsaA/B heterodimer binds the P700 chlorophyll special pair and subsequent electron acceptors. PSI consists of a core antenna complex that captures photons, and an electron transfer chain that converts photonic excitation into a charge separation. The eukaryotic PSI reaction center is composed of at least 11 subunits. The cofactor is P700 is a chlorophyll a/chlorophyll a' dimer, A0 is one or more chlorophyll a, A1 is one or both phylloquinones and FX is a shared 4Fe-4S iron-sulfur center..

It localises to the plastid. Its subcellular location is the chloroplast thylakoid membrane. It catalyses the reaction reduced [plastocyanin] + hnu + oxidized [2Fe-2S]-[ferredoxin] = oxidized [plastocyanin] + reduced [2Fe-2S]-[ferredoxin]. In terms of biological role, psaA and PsaB bind P700, the primary electron donor of photosystem I (PSI), as well as the electron acceptors A0, A1 and FX. PSI is a plastocyanin-ferredoxin oxidoreductase, converting photonic excitation into a charge separation, which transfers an electron from the donor P700 chlorophyll pair to the spectroscopically characterized acceptors A0, A1, FX, FA and FB in turn. Oxidized P700 is reduced on the lumenal side of the thylakoid membrane by plastocyanin. The polypeptide is Photosystem I P700 chlorophyll a apoprotein A1 (Pinus thunbergii (Japanese black pine)).